Here is an 808-residue protein sequence, read N- to C-terminus: Type VI secretion system spike protein VgrG4b (808 aa).

It belongs to the VgrG protein family.

The protein localises to the secreted. Functionally, part of the H2 type VI secretion system (H2-T6SS) specialized secretion system, which delivers several virulence factors in both prokaryotic and eukaryotic cells during infection. Allows the delivery of the phospholipase effector PldA to target cells where it exerts its toxicity. This Pseudomonas aeruginosa (strain ATCC 15692 / DSM 22644 / CIP 104116 / JCM 14847 / LMG 12228 / 1C / PRS 101 / PAO1) protein is Type VI secretion system spike protein VgrG4b.